The sequence spans 71 residues: Plasticin-DA1 (71 aa).

An N-terminal signal peptide occupies residues 1 to 22 (MAFLKKSLFLVLFLALVPLSIC). Positions 23-42 (EAEKREEENEEKQEDDDESE) are excised as a propeptide. Residues 25-45 (EKREEENEEKQEDDDESEKKR) form a disordered region. Residues 30 to 40 (ENEEKQEDDDE) are compositionally biased toward acidic residues. Glycine amide is present on G68. Residues 70–71 (ER) constitute a propeptide that is removed on maturation.

It belongs to the frog skin active peptide (FSAP) family. Plasticin subfamily. In terms of tissue distribution, expressed by the skin glands.

It is found in the secreted. The protein localises to the target cell membrane. Functionally, neutral peptide with no antimicrobial activity. Does not permeate bacterial membranes. May act in synergy with cationic peptides by enhancing their activity. Has a moderate hemolytic activity. It interacts with zwitterionic phospholipids (DMPC) without perturbing either the interface or inside of the bilayer, whereas it causes little perturbations at the interface peptide-anionic vesicles (DMPG) as well as in the bilayer alkyl chains. This is Plasticin-DA1 from Agalychnis dacnicolor (Giant Mexican leaf frog).